The following is a 424-amino-acid chain: Enolase (424 aa).

Q163 provides a ligand contact to (2R)-2-phosphoglycerate. The active-site Proton donor is E204. Positions 241, 284, and 311 each coordinate Mg(2+). (2R)-2-phosphoglycerate contacts are provided by K336, R365, S366, and K387. K336 functions as the Proton acceptor in the catalytic mechanism.

This sequence belongs to the enolase family. It depends on Mg(2+) as a cofactor.

The protein localises to the cytoplasm. It localises to the secreted. It is found in the cell surface. It catalyses the reaction (2R)-2-phosphoglycerate = phosphoenolpyruvate + H2O. Its pathway is carbohydrate degradation; glycolysis; pyruvate from D-glyceraldehyde 3-phosphate: step 4/5. In terms of biological role, catalyzes the reversible conversion of 2-phosphoglycerate (2-PG) into phosphoenolpyruvate (PEP). It is essential for the degradation of carbohydrates via glycolysis. The chain is Enolase from Dictyoglomus turgidum (strain DSM 6724 / Z-1310).